The sequence spans 514 residues: Bifunctional purine biosynthesis protein PurH (514 aa).

Positions Met-1–Cys-146 constitute an MGS-like domain.

Belongs to the PurH family.

It carries out the reaction (6R)-10-formyltetrahydrofolate + 5-amino-1-(5-phospho-beta-D-ribosyl)imidazole-4-carboxamide = 5-formamido-1-(5-phospho-D-ribosyl)imidazole-4-carboxamide + (6S)-5,6,7,8-tetrahydrofolate. The enzyme catalyses IMP + H2O = 5-formamido-1-(5-phospho-D-ribosyl)imidazole-4-carboxamide. It participates in purine metabolism; IMP biosynthesis via de novo pathway; 5-formamido-1-(5-phospho-D-ribosyl)imidazole-4-carboxamide from 5-amino-1-(5-phospho-D-ribosyl)imidazole-4-carboxamide (10-formyl THF route): step 1/1. The protein operates within purine metabolism; IMP biosynthesis via de novo pathway; IMP from 5-formamido-1-(5-phospho-D-ribosyl)imidazole-4-carboxamide: step 1/1. The chain is Bifunctional purine biosynthesis protein PurH from Cyanothece sp. (strain PCC 7425 / ATCC 29141).